The sequence spans 188 residues: GTP cyclohydrolase 1 (188 aa).

Residues Cys76, His79, and Cys148 each coordinate Zn(2+).

The protein belongs to the GTP cyclohydrolase I family. Toroid-shaped homodecamer, composed of two pentamers of five dimers.

It catalyses the reaction GTP + H2O = 7,8-dihydroneopterin 3'-triphosphate + formate + H(+). The protein operates within cofactor biosynthesis; 7,8-dihydroneopterin triphosphate biosynthesis; 7,8-dihydroneopterin triphosphate from GTP: step 1/1. The protein is GTP cyclohydrolase 1 of Caldanaerobacter subterraneus subsp. tengcongensis (strain DSM 15242 / JCM 11007 / NBRC 100824 / MB4) (Thermoanaerobacter tengcongensis).